The following is a 213-amino-acid chain: Orotate phosphoribosyltransferase (213 aa).

Position 26 (lysine 26) interacts with 5-phospho-alpha-D-ribose 1-diphosphate. An orotate-binding site is contributed by 34-35; that stretch reads FF. 5-phospho-alpha-D-ribose 1-diphosphate contacts are provided by residues 72–73, arginine 98, lysine 99, lysine 102, and 123–131; these read YK and DDVISAGTS. Orotate-binding residues include serine 127 and arginine 155.

The protein belongs to the purine/pyrimidine phosphoribosyltransferase family. PyrE subfamily. As to quaternary structure, homodimer. The cofactor is Mg(2+).

It carries out the reaction orotidine 5'-phosphate + diphosphate = orotate + 5-phospho-alpha-D-ribose 1-diphosphate. The protein operates within pyrimidine metabolism; UMP biosynthesis via de novo pathway; UMP from orotate: step 1/2. In terms of biological role, catalyzes the transfer of a ribosyl phosphate group from 5-phosphoribose 1-diphosphate to orotate, leading to the formation of orotidine monophosphate (OMP). This Neisseria gonorrhoeae (strain ATCC 700825 / FA 1090) protein is Orotate phosphoribosyltransferase.